Here is a 216-residue protein sequence, read N- to C-terminus: Probable GTP-binding protein EngB (216 aa).

The 175-residue stretch at 27-201 (EGIEVAFAGR…REKLDTWFSE (175 aa)) folds into the EngB-type G domain. Residues 35-42 (GRSNAGKS), 62-66 (GRTQL), 80-83 (DLPG), 147-150 (TKAD), and 180-182 (FSS) each bind GTP. Residues Ser42 and Thr64 each contribute to the Mg(2+) site.

Belongs to the TRAFAC class TrmE-Era-EngA-EngB-Septin-like GTPase superfamily. EngB GTPase family. It depends on Mg(2+) as a cofactor.

In terms of biological role, necessary for normal cell division and for the maintenance of normal septation. In Yersinia pseudotuberculosis serotype O:1b (strain IP 31758), this protein is Probable GTP-binding protein EngB.